We begin with the raw amino-acid sequence, 124 residues long: Small ribosomal subunit protein uS12c (124 aa).

2 disordered regions span residues Met1–Pro28 and Ala104–Ser124. 2 stretches are compositionally biased toward basic residues: residues Glu11–Lys20 and Asp109–Ser124.

This sequence belongs to the universal ribosomal protein uS12 family. In terms of assembly, part of the 30S ribosomal subunit.

The protein localises to the plastid. Its subcellular location is the chloroplast. Functionally, with S4 and S5 plays an important role in translational accuracy. Located at the interface of the 30S and 50S subunits. The chain is Small ribosomal subunit protein uS12c (rps12) from Porphyra purpurea (Red seaweed).